A 585-amino-acid polypeptide reads, in one-letter code: Arginine--tRNA ligase (585 aa).

A 'HIGH' region motif is present at residues 127-137 (PNTNKPLHVGH).

It belongs to the class-I aminoacyl-tRNA synthetase family. As to quaternary structure, monomer.

Its subcellular location is the cytoplasm. The catalysed reaction is tRNA(Arg) + L-arginine + ATP = L-arginyl-tRNA(Arg) + AMP + diphosphate. This Borreliella burgdorferi (strain ATCC 35210 / DSM 4680 / CIP 102532 / B31) (Borrelia burgdorferi) protein is Arginine--tRNA ligase (argS).